Here is a 55-residue protein sequence, read N- to C-terminus: Sec-independent protein translocase protein TatA (55 aa).

Residues 1-21 (MGMSFSHLLIVLLIIFVLFGA) traverse the membrane as a helical segment.

Belongs to the TatA/E family. In terms of assembly, the Tat system comprises two distinct complexes: a TatABC complex, containing multiple copies of TatA, TatB and TatC subunits, and a separate TatA complex, containing only TatA subunits. Substrates initially bind to the TatABC complex, which probably triggers association of the separate TatA complex to form the active translocon.

Its subcellular location is the cell inner membrane. In terms of biological role, part of the twin-arginine translocation (Tat) system that transports large folded proteins containing a characteristic twin-arginine motif in their signal peptide across membranes. TatA could form the protein-conducting channel of the Tat system. The protein is Sec-independent protein translocase protein TatA of Rickettsia peacockii (strain Rustic).